A 100-amino-acid polypeptide reads, in one-letter code: NADH-quinone oxidoreductase subunit K (100 aa).

Helical transmembrane passes span Met-1 to Gly-21, Ile-28 to Ala-48, and Phe-64 to Phe-84.

Belongs to the complex I subunit 4L family. As to quaternary structure, NDH-1 is composed of 14 different subunits. Subunits NuoA, H, J, K, L, M, N constitute the membrane sector of the complex.

It is found in the cell inner membrane. It catalyses the reaction a quinone + NADH + 5 H(+)(in) = a quinol + NAD(+) + 4 H(+)(out). Its function is as follows. NDH-1 shuttles electrons from NADH, via FMN and iron-sulfur (Fe-S) centers, to quinones in the respiratory chain. The immediate electron acceptor for the enzyme in this species is believed to be ubiquinone. Couples the redox reaction to proton translocation (for every two electrons transferred, four hydrogen ions are translocated across the cytoplasmic membrane), and thus conserves the redox energy in a proton gradient. This Helicobacter pylori (strain G27) protein is NADH-quinone oxidoreductase subunit K.